Here is a 239-residue protein sequence, read N- to C-terminus: Putative ABC transporter ATP-binding protein BR1368/BS1330_I1363 (239 aa).

In terms of domain architecture, ABC transporter spans 5–234 (LSLDRVSVSR…EQVHLHYVEA (230 aa)). ATP is bound at residue 37–44 (GDNGVGKT).

Belongs to the ABC transporter superfamily.

It is found in the cell inner membrane. Functionally, probably part of an ABC transporter complex. Responsible for energy coupling to the transport system. The polypeptide is Putative ABC transporter ATP-binding protein BR1368/BS1330_I1363 (Brucella suis biovar 1 (strain 1330)).